The chain runs to 244 residues: DNA repair protein RecO (244 aa).

Belongs to the RecO family.

In terms of biological role, involved in DNA repair and RecF pathway recombination. In Myxococcus xanthus (strain DK1622), this protein is DNA repair protein RecO.